A 670-amino-acid polypeptide reads, in one-letter code: DNA ligase (670 aa).

NAD(+)-binding positions include 32–36 (DAEYD), 81–82 (SL), and E113. K115 functions as the N6-AMP-lysine intermediate in the catalytic mechanism. Positions 136, 173, 290, and 314 each coordinate NAD(+). Zn(2+) contacts are provided by C408, C411, C426, and C432. The 79-residue stretch at 592–670 (EIDSPFAGKT…EAEMIRLLGE (79 aa)) folds into the BRCT domain.

Belongs to the NAD-dependent DNA ligase family. LigA subfamily. The cofactor is Mg(2+). It depends on Mn(2+) as a cofactor.

It carries out the reaction NAD(+) + (deoxyribonucleotide)n-3'-hydroxyl + 5'-phospho-(deoxyribonucleotide)m = (deoxyribonucleotide)n+m + AMP + beta-nicotinamide D-nucleotide.. In terms of biological role, DNA ligase that catalyzes the formation of phosphodiester linkages between 5'-phosphoryl and 3'-hydroxyl groups in double-stranded DNA using NAD as a coenzyme and as the energy source for the reaction. It is essential for DNA replication and repair of damaged DNA. This chain is DNA ligase, found in Yersinia pseudotuberculosis serotype IB (strain PB1/+).